The primary structure comprises 236 residues: Uridylate kinase (236 aa).

Residue 10 to 11 (GS) coordinates ATP. UMP is bound at residue Gly44. Residues Gly45 and Arg49 each contribute to the ATP site. UMP contacts are provided by residues Asp66 and 114–120 (ITPGQTT). 3 residues coordinate ATP: Thr140, Tyr146, and Asp149.

It belongs to the UMP kinase family. As to quaternary structure, homohexamer.

It localises to the cytoplasm. The enzyme catalyses UMP + ATP = UDP + ADP. It functions in the pathway pyrimidine metabolism; CTP biosynthesis via de novo pathway; UDP from UMP (UMPK route): step 1/1. Its activity is regulated as follows. Inhibited by UTP. Its function is as follows. Catalyzes the reversible phosphorylation of UMP to UDP. In Methanospirillum hungatei JF-1 (strain ATCC 27890 / DSM 864 / NBRC 100397 / JF-1), this protein is Uridylate kinase.